A 255-amino-acid chain; its full sequence is Large ribosomal subunit protein uL6m (255 aa).

The tract at residues 39-61 is disordered; that stretch reads AARRNFSATTTRPSKLGRTPLSI.

This sequence belongs to the universal ribosomal protein uL6 family. Component of the mitochondrial large ribosomal subunit (mt-LSU). Mature N.crassa 74S mitochondrial ribosomes consist of a small (37S) and a large (54S) subunit. The 37S small subunit contains a 16S ribosomal RNA (16S mt-rRNA) and 32 different proteins. The 54S large subunit contains a 23S rRNA (23S mt-rRNA) and 42 different proteins.

It is found in the mitochondrion. Its function is as follows. Component of the mitochondrial ribosome (mitoribosome), a dedicated translation machinery responsible for the synthesis of mitochondrial genome-encoded proteins, including at least some of the essential transmembrane subunits of the mitochondrial respiratory chain. The mitoribosomes are attached to the mitochondrial inner membrane and translation products are cotranslationally integrated into the membrane. In Neurospora crassa (strain ATCC 24698 / 74-OR23-1A / CBS 708.71 / DSM 1257 / FGSC 987), this protein is Large ribosomal subunit protein uL6m (mrpl6).